The chain runs to 610 residues: MNSQDLKKRQEKIRNFSIIAHIDHGKSTLADRILEKTETVSSREMQAQLLDSMDLERERGITIKLNAIELNYTAKDGETYIFHLIDTPGHVDFTYEVSRSLAACEGAILVVDAAQGIEAQTLANVYLALDNDLEILPVINKIDLPAADPERVRHEVEDVIGLDASEAVLASAKAGIGIEEILEQIVEKVPAPTGDVDAPLQALIFDSVYDAYRGVILQVRIVNGIVKPGDKIQMMSNGKTFDVTEVGIFTPKAVGRDFLATGDVGYVAASIKTVADTRVGDTVTLANNPAKEALHGYKQMNPMVFAGIYPIESNKYNDLREALEKLQLNDASLQFEPETSQALGFGFRCGFLGLLHMDVIQERLEREFNIDLIMTAPSVVYHVHTTDEDMIEVSNPSEFPDPTRVAFIEEPYVKAQIMVPQEFVGAVMELSQRKRGDFVTMDYIDDNRVNVIYQIPLAEIVFDFFDKLKSSTRGYASFDYDMSEYRRSQLVKMDILLNGDKVDALSFIVHKEFAYERGKIIVEKLKKIIPRQQFEVPIQAAIGQKIVARSDIKALRKNVLAKCYGGDVSRKRKLLEKQKAGKKRMKAIGSVEVPQEAFLSVLSMDDDTKK.

The tr-type G domain maps to 11 to 193; it reads EKIRNFSIIA…QIVEKVPAPT (183 aa). Residues 23 to 28 and 140 to 143 each bind GTP; these read DHGKST and NKID.

This sequence belongs to the TRAFAC class translation factor GTPase superfamily. Classic translation factor GTPase family. LepA subfamily.

The protein resides in the cell membrane. The enzyme catalyses GTP + H2O = GDP + phosphate + H(+). Its function is as follows. Required for accurate and efficient protein synthesis under certain stress conditions. May act as a fidelity factor of the translation reaction, by catalyzing a one-codon backward translocation of tRNAs on improperly translocated ribosomes. Back-translocation proceeds from a post-translocation (POST) complex to a pre-translocation (PRE) complex, thus giving elongation factor G a second chance to translocate the tRNAs correctly. Binds to ribosomes in a GTP-dependent manner. The protein is Elongation factor 4 of Streptococcus pyogenes serotype M1.